The following is a 276-amino-acid chain: NADPH-dependent 7-cyano-7-deazaguanine reductase (276 aa).

83–85 (IES) lines the substrate pocket. 85-86 (SK) provides a ligand contact to NADPH. Cys184 serves as the catalytic Thioimide intermediate. Asp191 serves as the catalytic Proton donor. 223-224 (HE) contributes to the substrate binding site. 252-253 (RG) is an NADPH binding site.

Belongs to the GTP cyclohydrolase I family. QueF type 2 subfamily. Homodimer.

The protein resides in the cytoplasm. It carries out the reaction 7-aminomethyl-7-carbaguanine + 2 NADP(+) = 7-cyano-7-deazaguanine + 2 NADPH + 3 H(+). It participates in tRNA modification; tRNA-queuosine biosynthesis. Catalyzes the NADPH-dependent reduction of 7-cyano-7-deazaguanine (preQ0) to 7-aminomethyl-7-deazaguanine (preQ1). The protein is NADPH-dependent 7-cyano-7-deazaguanine reductase of Pseudomonas aeruginosa (strain ATCC 15692 / DSM 22644 / CIP 104116 / JCM 14847 / LMG 12228 / 1C / PRS 101 / PAO1).